Here is a 359-residue protein sequence, read N- to C-terminus: NADH-quinone oxidoreductase subunit H (359 aa).

The next 8 membrane-spanning stretches (helical) occupy residues 16–36 (IWPA…AVLA), 94–114 (GLFI…WAVI), 128–148 (GLLF…IAGW), 167–187 (VSYE…SGSL), 205–225 (GLTF…VYFI), 261–281 (FFLA…LLFL), 296–316 (IPGW…FLWV), and 331–351 (LGWK…GAWM).

The protein belongs to the complex I subunit 1 family. In terms of assembly, NDH-1 is composed of 14 different subunits. Subunits NuoA, H, J, K, L, M, N constitute the membrane sector of the complex.

It is found in the cell inner membrane. The enzyme catalyses a quinone + NADH + 5 H(+)(in) = a quinol + NAD(+) + 4 H(+)(out). Functionally, NDH-1 shuttles electrons from NADH, via FMN and iron-sulfur (Fe-S) centers, to quinones in the respiratory chain. The immediate electron acceptor for the enzyme in this species is believed to be ubiquinone. Couples the redox reaction to proton translocation (for every two electrons transferred, four hydrogen ions are translocated across the cytoplasmic membrane), and thus conserves the redox energy in a proton gradient. This subunit may bind ubiquinone. The polypeptide is NADH-quinone oxidoreductase subunit H (Polaromonas naphthalenivorans (strain CJ2)).